Reading from the N-terminus, the 274-residue chain is Small nuclear ribonucleoprotein-associated protein B (274 aa).

In terms of domain architecture, Sm spans 5–85; that stretch reads PKSSKMLQYI…VVSMSVEAPP (81 aa). The tract at residues 148-274 is disordered; sequence PGGGVPPPMG…PMGRGGFQRK (127 aa). Repeat unit 1 spans residues 162-171; sequence PPQGFPPGGP. Residues 162 to 265 form a 6 X 10 AA repeats of P-P-Q-G-F-P-P-G-G-P region; it reads PPQGFPPGGP…PPQGFPPGGP (104 aa). The segment covering 173-187 has biased composition (low complexity); that stretch reads PQGAFNNNPNNNNGG. 5 tandem repeats follow at residues 188–197, 204–213, 225–234, 241–250, and 256–265. Residues 216–226 are compositionally biased toward low complexity; sequence GPNLNNGNMPP. Positions 265 to 274 are enriched in gly residues; that stretch reads PMGRGGFQRK.

Belongs to the snRNP SmB/SmN family.

Its subcellular location is the cytoplasm. The protein resides in the cytosol. It is found in the nucleus. Functionally, plays a role in pre-mRNA splicing as a core component of the spliceosomal U1, U2, U4 and U5 small nuclear ribonucleoproteins (snRNPs), the building blocks of the spliceosome. The protein is Small nuclear ribonucleoprotein-associated protein B (snrpb) of Dictyostelium discoideum (Social amoeba).